A 158-amino-acid polypeptide reads, in one-letter code: NAD(P)H-quinone oxidoreductase subunit J, chloroplastic (158 aa).

It belongs to the complex I 30 kDa subunit family. In terms of assembly, NDH is composed of at least 16 different subunits, 5 of which are encoded in the nucleus.

It localises to the plastid. It is found in the chloroplast thylakoid membrane. The catalysed reaction is a plastoquinone + NADH + (n+1) H(+)(in) = a plastoquinol + NAD(+) + n H(+)(out). It catalyses the reaction a plastoquinone + NADPH + (n+1) H(+)(in) = a plastoquinol + NADP(+) + n H(+)(out). Functionally, NDH shuttles electrons from NAD(P)H:plastoquinone, via FMN and iron-sulfur (Fe-S) centers, to quinones in the photosynthetic chain and possibly in a chloroplast respiratory chain. The immediate electron acceptor for the enzyme in this species is believed to be plastoquinone. Couples the redox reaction to proton translocation, and thus conserves the redox energy in a proton gradient. This chain is NAD(P)H-quinone oxidoreductase subunit J, chloroplastic, found in Solanum bulbocastanum (Wild potato).